Reading from the N-terminus, the 212-residue chain is Fe/S biogenesis protein NfuA (212 aa).

[4Fe-4S] cluster-binding residues include Cys169 and Cys172.

It belongs to the NfuA family. In terms of assembly, homodimer. [4Fe-4S] cluster serves as cofactor.

Its function is as follows. Involved in iron-sulfur cluster biogenesis. Binds a 4Fe-4S cluster, can transfer this cluster to apoproteins, and thereby intervenes in the maturation of Fe/S proteins. Could also act as a scaffold/chaperone for damaged Fe/S proteins. In Acinetobacter baumannii (strain AB307-0294), this protein is Fe/S biogenesis protein NfuA.